We begin with the raw amino-acid sequence, 749 residues long: Subtilisin-like protease SBT4.14 (749 aa).

Positions methionine 1–serine 28 are cleaved as a signal peptide. The propeptide at alanine 29–histidine 115 is activation peptide. The 78-residue stretch at tyrosine 38–histidine 115 folds into the Inhibitor I9 domain. The Peptidase S8 domain occupies serine 119 to alanine 595. Aspartate 145 functions as the Charge relay system in the catalytic mechanism. A glycan (N-linked (GlcNAc...) asparagine) is linked at asparagine 176. The active-site Charge relay system is histidine 210. Residues asparagine 225, asparagine 233, asparagine 446, and asparagine 458 are each glycosylated (N-linked (GlcNAc...) asparagine). The active-site Charge relay system is the serine 536. An N-linked (GlcNAc...) asparagine glycan is attached at asparagine 618.

Belongs to the peptidase S8 family. In terms of processing, the C-terminal propeptide is autocleaved. Expressed only in roots, particularly in xylem.

In Arabidopsis thaliana (Mouse-ear cress), this protein is Subtilisin-like protease SBT4.14.